Here is a 1077-residue protein sequence, read N- to C-terminus: Carbamoyl phosphate synthase large chain (1077 aa).

Residues Pro-2–Glu-403 form a carboxyphosphate synthetic domain region. ATP is bound by residues Arg-129, Arg-169, Gly-175, Gly-176, Glu-208, Leu-210, Glu-215, Gly-241, Ile-242, His-243, Gln-285, and Glu-299. The region spanning Asp-133–Val-328 is the ATP-grasp 1 domain. Positions 285, 299, and 301 each coordinate Mg(2+). Gln-285, Glu-299, and Asn-301 together coordinate Mn(2+). The oligomerization domain stretch occupies residues Val-404 to Ser-553. The tract at residues Asn-554–Gln-936 is carbamoyl phosphate synthetic domain. The ATP-grasp 2 domain maps to Gln-679–Val-870. 10 residues coordinate ATP: Arg-715, Arg-754, Leu-756, Glu-761, Gly-786, Val-787, His-788, Ser-789, Gln-829, and Glu-841. 3 residues coordinate Mg(2+): Gln-829, Glu-841, and Asn-843. The Mn(2+) site is built by Gln-829, Glu-841, and Asn-843. Residues Ser-937 to Ala-1077 enclose the MGS-like domain. Residues Ser-937–Ala-1077 form an allosteric domain region.

Belongs to the CarB family. Composed of two chains; the small (or glutamine) chain promotes the hydrolysis of glutamine to ammonia, which is used by the large (or ammonia) chain to synthesize carbamoyl phosphate. Tetramer of heterodimers (alpha,beta)4. Mg(2+) serves as cofactor. Requires Mn(2+) as cofactor.

The catalysed reaction is hydrogencarbonate + L-glutamine + 2 ATP + H2O = carbamoyl phosphate + L-glutamate + 2 ADP + phosphate + 2 H(+). It carries out the reaction hydrogencarbonate + NH4(+) + 2 ATP = carbamoyl phosphate + 2 ADP + phosphate + 2 H(+). It participates in amino-acid biosynthesis; L-arginine biosynthesis; carbamoyl phosphate from bicarbonate: step 1/1. Its pathway is pyrimidine metabolism; UMP biosynthesis via de novo pathway; (S)-dihydroorotate from bicarbonate: step 1/3. Large subunit of the glutamine-dependent carbamoyl phosphate synthetase (CPSase). CPSase catalyzes the formation of carbamoyl phosphate from the ammonia moiety of glutamine, carbonate, and phosphate donated by ATP, constituting the first step of 2 biosynthetic pathways, one leading to arginine and/or urea and the other to pyrimidine nucleotides. The large subunit (synthetase) binds the substrates ammonia (free or transferred from glutamine from the small subunit), hydrogencarbonate and ATP and carries out an ATP-coupled ligase reaction, activating hydrogencarbonate by forming carboxy phosphate which reacts with ammonia to form carbamoyl phosphate. This chain is Carbamoyl phosphate synthase large chain, found in Yersinia pestis.